A 254-amino-acid polypeptide reads, in one-letter code: Proteasome subunit alpha (254 aa).

The segment at 231 to 254 (ESGAASADGEAETEAETDSGSDEE) is disordered. Acidic residues predominate over residues 239 to 254 (GEAETEAETDSGSDEE).

The protein belongs to the peptidase T1A family. In terms of assembly, the 20S proteasome core is composed of 14 alpha and 14 beta subunits that assemble into four stacked heptameric rings, resulting in a barrel-shaped structure. The two inner rings, each composed of seven catalytic beta subunits, are sandwiched by two outer rings, each composed of seven alpha subunits. The catalytic chamber with the active sites is on the inside of the barrel. Has probably a gated structure, the ends of the cylinder being occluded by the N-termini of the alpha-subunits. Is likely capped by the proteasome-associated ATPase, ARC. The N-terminus is blocked.

It localises to the cytoplasm. The protein operates within protein degradation; proteasomal Pup-dependent pathway. With respect to regulation, the formation of the proteasomal ATPase ARC-20S proteasome complex, likely via the docking of the C-termini of ARC into the intersubunit pockets in the alpha-rings, may trigger opening of the gate for substrate entry. Interconversion between the open-gate and close-gate conformations leads to a dynamic regulation of the 20S proteasome proteolysis activity. Peptidolytic activity is completely inhibited by lactacystin, and to a lesser extent, by N-acetyl-Leu-Leu-norleucinal (Ac-LLnL) and benzoyloxycarbonyl-Leu-Leu-Leu-vinylsulfone (Z-LLL-VS) in vitro. In terms of biological role, component of the proteasome core, a large protease complex with broad specificity involved in protein degradation. The S.coelicolor proteasome is able to cleave oligopeptides after hydrophobic residues, but not after basic or acidic residues, thus displaying chymotrypsin-like activity but not trypsin-like activity. This chain is Proteasome subunit alpha, found in Streptomyces coelicolor (strain ATCC BAA-471 / A3(2) / M145).